A 126-amino-acid chain; its full sequence is Holo-[acyl-carrier-protein] synthase (126 aa).

2 residues coordinate Mg(2+): Asp9 and Glu58.

The protein belongs to the P-Pant transferase superfamily. AcpS family. The cofactor is Mg(2+).

The protein resides in the cytoplasm. It catalyses the reaction apo-[ACP] + CoA = holo-[ACP] + adenosine 3',5'-bisphosphate + H(+). In terms of biological role, transfers the 4'-phosphopantetheine moiety from coenzyme A to a Ser of acyl-carrier-protein. The protein is Holo-[acyl-carrier-protein] synthase of Hamiltonella defensa subsp. Acyrthosiphon pisum (strain 5AT).